Here is a 343-residue protein sequence, read N- to C-terminus: Pyridoxal 5'-phosphate synthase subunit PDX1 (343 aa).

D73 is a D-ribose 5-phosphate binding site. Catalysis depends on K130, which acts as the Schiff-base intermediate with D-ribose 5-phosphate. Residue G202 participates in D-ribose 5-phosphate binding. Q214 provides a ligand contact to D-glyceraldehyde 3-phosphate. D-ribose 5-phosphate contacts are provided by residues G263 and 284–285; that span reads GS.

It belongs to the PdxS/SNZ family.

The catalysed reaction is aldehydo-D-ribose 5-phosphate + D-glyceraldehyde 3-phosphate + L-glutamine = pyridoxal 5'-phosphate + L-glutamate + phosphate + 3 H2O + H(+). It participates in cofactor biosynthesis; pyridoxal 5'-phosphate biosynthesis. Functionally, catalyzes the formation of pyridoxal 5'-phosphate from ribose 5-phosphate (RBP), glyceraldehyde 3-phosphate (G3P) and ammonia. The ammonia is provided by PDX2. Can also use ribulose 5-phosphate and dihydroxyacetone phosphate as substrates, resulting from enzyme-catalyzed isomerization of RBP and G3P, respectively. Also plays an indirect role in resistance to singlet oxygen-generating photosensitizers. This Cercospora nicotianae (Barn spot disease fungus) protein is Pyridoxal 5'-phosphate synthase subunit PDX1 (PDX1).